Consider the following 574-residue polypeptide: Sulfate adenylyltransferase (574 aa).

The N-terminal stretch occupies residues 1–169; the sequence is MANPPHGGVL…IEAINKLNHY (169 aa). The interval 170-394 is catalytic; that stretch reads DYVALRYTPA…LRESSPPRHT (225 aa). A sulfate-binding site is contributed by Q197. Residues 197-200 and 291-294 each bind ATP; these read QTRN and GRDH. Residues T198, R199, and N200 contribute to the active site. Residue R199 participates in sulfate binding. Sulfate is bound at residue A295. ATP is bound at residue V333. The tract at residues 395–574 is allosteric regulation domain; adenylyl-sulfate kinase-like; sequence QGFTIFLTGY…LETEGFFDRS (180 aa). Residues 434 to 437, R451, 477 to 478, and R516 contribute to the 3'-phosphoadenylyl sulfate site; these read DTVR and IA.

It in the N-terminal section; belongs to the sulfate adenylyltransferase family. This sequence in the C-terminal section; belongs to the APS kinase family. Homohexamer. Dimer of trimers.

Its subcellular location is the cytoplasm. The catalysed reaction is sulfate + ATP + H(+) = adenosine 5'-phosphosulfate + diphosphate. It functions in the pathway sulfur metabolism; hydrogen sulfide biosynthesis; sulfite from sulfate: step 1/3. Allosterically inhibited by 3'-phosphoadenosine 5'-phosphosulfate (PAPS). In terms of biological role, catalyzes the first intracellular reaction of sulfate assimilation, forming adenosine-5'-phosphosulfate (APS) from inorganic sulfate and ATP. Plays an important role in sulfate activation as a component of the biosynthesis pathway of sulfur-containing amino acids. This chain is Sulfate adenylyltransferase, found in Neosartorya fischeri (strain ATCC 1020 / DSM 3700 / CBS 544.65 / FGSC A1164 / JCM 1740 / NRRL 181 / WB 181) (Aspergillus fischerianus).